Consider the following 181-residue polypeptide: Shikimate kinase (181 aa).

17-22 (GAGKTT) contacts ATP. Threonine 21 lines the Mg(2+) pocket. Substrate contacts are provided by aspartate 39, arginine 63, and glycine 85. Residue arginine 122 coordinates ATP. Position 141 (arginine 141) interacts with substrate.

Belongs to the shikimate kinase family. Monomer. Mg(2+) serves as cofactor.

The protein resides in the cytoplasm. It catalyses the reaction shikimate + ATP = 3-phosphoshikimate + ADP + H(+). It functions in the pathway metabolic intermediate biosynthesis; chorismate biosynthesis; chorismate from D-erythrose 4-phosphate and phosphoenolpyruvate: step 5/7. Catalyzes the specific phosphorylation of the 3-hydroxyl group of shikimic acid using ATP as a cosubstrate. The polypeptide is Shikimate kinase (Nostoc sp. (strain PCC 7120 / SAG 25.82 / UTEX 2576)).